A 258-amino-acid chain; its full sequence is Snake venom serine protease PA (258 aa).

An N-terminal signal peptide occupies residues 1–18 (MVLIRVLANLLILQLSYA). Positions 19–24 (QKSPEL) are excised as a propeptide. Residues 25-249 (VVGGDECNIN…YNDWIKSIIA (225 aa)) enclose the Peptidase S1 domain. Cystine bridges form between Cys31–Cys163, Cys50–Cys66, Cys98–Cys256, Cys142–Cys210, Cys174–Cys189, and Cys200–Cys225. The N-linked (GlcNAc...) asparagine glycan is linked to Asn44. Catalysis depends on charge relay system residues His65 and Asp110. Ser204 (charge relay system) is an active-site residue.

Belongs to the peptidase S1 family. Snake venom subfamily. Monomer. In terms of tissue distribution, expressed by the venom gland.

It is found in the secreted. Functionally, snake venom serine protease that may act in the hemostasis system of the prey. This is Snake venom serine protease PA from Trimeresurus stejnegeri (Chinese green tree viper).